The primary structure comprises 429 residues: Phosphoglucosamine mutase (429 aa).

Catalysis depends on serine 96, which acts as the Phosphoserine intermediate. Residues serine 96, aspartate 230, aspartate 232, and aspartate 234 each contribute to the Mg(2+) site. Residue serine 96 is modified to Phosphoserine.

The protein belongs to the phosphohexose mutase family. Mg(2+) is required as a cofactor. In terms of processing, activated by phosphorylation.

The enzyme catalyses alpha-D-glucosamine 1-phosphate = D-glucosamine 6-phosphate. Catalyzes the conversion of glucosamine-6-phosphate to glucosamine-1-phosphate. The protein is Phosphoglucosamine mutase of Thermotoga maritima (strain ATCC 43589 / DSM 3109 / JCM 10099 / NBRC 100826 / MSB8).